Reading from the N-terminus, the 137-residue chain is Ribosome-binding factor A (137 aa).

Positions 110–137 (RIQQEKEGATDDRDQNDSGEDATPHSND) are disordered. Positions 112–125 (QQEKEGATDDRDQN) are enriched in basic and acidic residues.

Belongs to the RbfA family. In terms of assembly, monomer. Binds 30S ribosomal subunits, but not 50S ribosomal subunits or 70S ribosomes.

The protein localises to the cytoplasm. Functionally, one of several proteins that assist in the late maturation steps of the functional core of the 30S ribosomal subunit. Associates with free 30S ribosomal subunits (but not with 30S subunits that are part of 70S ribosomes or polysomes). Required for efficient processing of 16S rRNA. May interact with the 5'-terminal helix region of 16S rRNA. This chain is Ribosome-binding factor A, found in Rhodopirellula baltica (strain DSM 10527 / NCIMB 13988 / SH1).